The primary structure comprises 549 residues: Membrane protein insertase YidC (549 aa).

A helical membrane pass occupies residues 8 to 28 (VLLATVLSVAVLIVWQFVFPS). Over residues 29-39 (PKPKPQPPKPP) the composition is skewed to pro residues. A disordered region spans residues 29–68 (PKPKPQPPKPPEAAQRAEAPAAPAPGQPAAQAPAPAVPQD). Low complexity-rich tracts occupy residues 40 to 49 (EAAQRAEAPA) and 55 to 68 (QPAAQAPAPAVPQD). 4 helical membrane-spanning segments follow: residues 328–348 (IDYGAMARPFAFFARLLLFVM), 354–374 (LVANWGLAIILLTVLVKVLLY), 424–444 (LGGCLPMLIQLPIWFALYATL), and 502–522 (PGFFTLLMLSVPAGLTLYIFV).

It belongs to the OXA1/ALB3/YidC family. Type 1 subfamily. As to quaternary structure, interacts with the Sec translocase complex via SecD. Specifically interacts with transmembrane segments of nascent integral membrane proteins during membrane integration.

Its subcellular location is the cell inner membrane. In terms of biological role, required for the insertion and/or proper folding and/or complex formation of integral membrane proteins into the membrane. Involved in integration of membrane proteins that insert both dependently and independently of the Sec translocase complex, as well as at least some lipoproteins. Aids folding of multispanning membrane proteins. This is Membrane protein insertase YidC from Anaeromyxobacter sp. (strain Fw109-5).